Reading from the N-terminus, the 676-residue chain is ATP-dependent zinc metalloprotease FtsH (676 aa).

The Cytoplasmic segment spans residues 1–12; it reads MSFFDKIFKKFH. The helical transmembrane segment at 13–33 threads the bilayer; it reads MGVLYFAVILIGATFIYCYFT. Residues 34–115 are Extracellular-facing; that stretch reads KHEKKDNNTF…DPRPWNGYEH (82 aa). A helical transmembrane segment spans residues 116 to 136; that stretch reads VFWVFRQCLTMLFFYCFFLFF. Residues 137 to 676 lie on the Cytoplasmic side of the membrane; it reads ADTIKQMGQE…EVLSTDSEQT (540 aa). Residue 212–219 participates in ATP binding; it reads GPPGTGKT. H433 is a binding site for Zn(2+). The active site involves E434. Positions 437 and 509 each coordinate Zn(2+). The disordered stretch occupies residues 610–676; the sequence is EKEETNAPTQ…EVLSTDSEQT (67 aa). The span at 615–636 shows a compositional bias: polar residues; it reads NAPTQTTSQMSSNNETTNTDKT. The segment covering 650–667 has biased composition (low complexity); the sequence is NQESNESNPNNNEKASPE.

It in the central section; belongs to the AAA ATPase family. The protein in the C-terminal section; belongs to the peptidase M41 family. Homohexamer. Requires Zn(2+) as cofactor.

The protein resides in the cell membrane. Acts as a processive, ATP-dependent zinc metallopeptidase for both cytoplasmic and membrane proteins. Plays a role in the quality control of integral membrane proteins. The protein is ATP-dependent zinc metalloprotease FtsH of Aster yellows witches'-broom phytoplasma (strain AYWB).